The chain runs to 147 residues: Protein disulfide isomerase-like 5-1 (147 aa).

A signal peptide spans 1 to 29 (MDLAPGRRARLLVALALVVLVALAARSGA). The Thioredoxin domain maps to 30–137 (EVITLTEETF…LKNFVSDEAE (108 aa)). Catalysis depends on nucleophile residues Cys59 and Cys62. A disulfide bridge connects residues Cys59 and Cys62.

The protein belongs to the protein disulfide isomerase family.

Functionally, acts as a protein-folding catalyst that interacts with nascent polypeptides to catalyze the formation, isomerization, and reduction or oxidation of disulfide bonds. May play a role in storage protein biogenesis. The polypeptide is Protein disulfide isomerase-like 5-1 (PDIL5-1) (Oryza sativa subsp. japonica (Rice)).